The following is a 359-amino-acid chain: Peptide chain release factor 1 (359 aa).

Q232 is modified (N5-methylglutamine).

The protein belongs to the prokaryotic/mitochondrial release factor family. In terms of processing, methylated by PrmC. Methylation increases the termination efficiency of RF1.

Its subcellular location is the cytoplasm. In terms of biological role, peptide chain release factor 1 directs the termination of translation in response to the peptide chain termination codons UAG and UAA. The sequence is that of Peptide chain release factor 1 from Lawsonia intracellularis (strain PHE/MN1-00).